Consider the following 203-residue polypeptide: Urease accessory protein UreE (203 aa).

Basic and acidic residues predominate over residues 170-190 (EHHGHSHSRSHDHDHDHDHQH). The segment at 170–203 (EHHGHSHSRSHDHDHDHDHQHGPSCSHGHHHGHR) is disordered.

The protein belongs to the UreE family.

The protein resides in the cytoplasm. Involved in urease metallocenter assembly. Binds nickel. Probably functions as a nickel donor during metallocenter assembly. In Burkholderia pseudomallei (strain 1710b), this protein is Urease accessory protein UreE.